Here is a 376-residue protein sequence, read N- to C-terminus: Nuclear hormone receptor family member nhr-124 (376 aa).

The nuclear receptor DNA-binding region spans 11 to 89 (PNICAICHQK…LGMRYHNSSE (79 aa)). 2 consecutive NR C4-type zinc fingers follow at residues 14–34 (CAIC…CNAC) and 50–72 (CKKG…CRSC). Residues 125 to 371 (HLHALNETRY…FSKILTEACR (247 aa)) enclose the NR LBD domain.

This sequence belongs to the nuclear hormone receptor family.

The protein resides in the nucleus. Orphan nuclear receptor. This chain is Nuclear hormone receptor family member nhr-124 (nhr-124), found in Caenorhabditis elegans.